The sequence spans 267 residues: Mlc titration factor A (267 aa).

His-111, His-148, His-152, and Glu-211 together coordinate Zn(2+).

This sequence belongs to the MtfA family. In terms of assembly, interacts with Mlc. Zn(2+) serves as cofactor.

It is found in the cytoplasm. Functionally, involved in the modulation of the activity of the glucose-phosphotransferase system (glucose-PTS). Interacts with the transcriptional repressor Mlc, preventing its interaction with DNA and leading to the modulation of expression of genes regulated by Mlc, including ptsG, which encodes the PTS system glucose-specific EIICB component. Shows zinc-dependent metallopeptidase activity. This is Mlc titration factor A from Yersinia enterocolitica serotype O:8 / biotype 1B (strain NCTC 13174 / 8081).